The primary structure comprises 191 residues: Divergent paired-related homeobox (191 aa).

The span at 1 to 15 shows a compositional bias: basic and acidic residues; sequence MPGSEDLRKGKDQMH. The tract at residues 1-20 is disordered; sequence MPGSEDLRKGKDQMHSHRKR. Residues 16–75 constitute a DNA-binding region (homeobox); it reads SHRKRTMFTKKQLEDLNILFNENPYPNPSLQKEMASKIDIHPTVLQVWFKNHRAKLKKAK.

The protein belongs to the paired homeobox family.

It localises to the nucleus. Functionally, transcription factor that acts as a repressor. The protein is Divergent paired-related homeobox of Homo sapiens (Human).